Here is a 321-residue protein sequence, read N- to C-terminus: Annexin B10 (321 aa).

Annexin repeat units lie at residues 15–86 (FDAS…GLMM), 87–158 (PPVE…LIVT), 171–243 (GQAK…AIVE), and 247–319 (SPAA…ALLG).

Belongs to the annexin family.

The chain is Annexin B10 (AnxB10) from Drosophila melanogaster (Fruit fly).